The primary structure comprises 5233 residues: E3 ubiquitin-protein ligase highwire (5233 aa).

The segment at 197-230 (VVGGPGLPAEKRPRRDSANSDADSDTEEPTEREP) is disordered. A compositionally biased stretch (basic and acidic residues) spans 205-214 (AEKRPRRDSA). 2 positions are modified to phosphoserine: S213 and S216. RCC1 repeat units lie at residues 615–666 (NGRV…ALLV), 669–724 (DGTV…FVTK), and 768–818 (KGQL…DKRL). The segment at 680 to 700 (RGEDGDSSKNRRQPKAVKPKK) is disordered. Residues 689-700 (NRRQPKAVKPKK) are compositionally biased toward basic residues. The tract at residues 900 to 950 (TELKPPPSDVQQRQQRSKTLIMRRKERKGELETGAAGGGAATPTDLDKDPP) is disordered. Residues 908-917 (DVQQRQQRSK) are compositionally biased toward polar residues. RCC1 repeat units follow at residues 931–983 (ETGA…VLTL), 984–1033 (AGEV…LLTS), and 1035–1084 (GMVY…TVAP). 2 disordered regions span residues 1051–1109 (LPSD…EMPP) and 1287–1327 (AAAA…PPQL). The segment covering 1092-1103 (RSQSPANVQPSG) has biased composition (polar residues). Low complexity predominate over residues 1287-1302 (AAAAAVAAPGTPVSAG). Residues 1436-1587 (NRFDNFGGGW…GQIPAILYRL (152 aa)) form a PHR domain 1 region. The segment at 1681-1718 (SSTSVATGGGSNAAHGSGVVTTAKSVQSKPNKDKNTPR) is disordered. Polar residues predominate over residues 1699–1709 (VVTTAKSVQSK). The segment at 2014-2169 (ARFARCDVSR…GQLPCILYYS (156 aa)) is PHR domain 2. Disordered regions lie at residues 2329–2353 (SADL…VPIN) and 2580–2604 (NGAG…NTHQ). Over residues 2336-2350 (QSQSVSQSQSQSQSV) the composition is skewed to low complexity. The segment at 2885 to 4082 (AEVSAPGPNL…FVSSLNPTGG (1198 aa)) is required for interaction with Rae1. One copy of the Filamin repeat lies at 2906–3000 (WGGMAPPPRI…LEEVYRVDVK (95 aa)). Disordered regions lie at residues 3005–3024 (PPPT…SKLR), 3117–3210 (KGVG…EPEQ), 3277–3333 (GGQD…ASET), 3348–3378 (TTTG…PMGP), 3551–3587 (PRLL…DLGR), and 3901–3936 (ASLA…APPV). Residues 3176–3191 (KHADLAEREAQVQEER) show a composition bias toward basic and acidic residues. The segment covering 3192–3210 (EKEEEQVDDEDADDREPEQ) has biased composition (acidic residues). The segment covering 3282–3292 (PRGNGNRSQQE) has biased composition (polar residues). A compositionally biased stretch (low complexity) spans 3348–3371 (TTTGQGEQQSELQLATTSTASSAS). A compositionally biased stretch (low complexity) spans 3917 to 3932 (QHHQQQQMNLQLQQHQ). Residues 4195-4374 (HNQVHSVATG…KHQPHLRLSH (180 aa)) form the DOC domain. Disordered stretches follow at residues 4633-4655 (ASTG…GAVL) and 4680-4702 (LRSR…ALPP). Residues 4638–4652 (SGSGGVSGSSSGNGG) are compositionally biased toward gly residues. Zn(2+)-binding residues include C4991, C4994, C5009, H5011, H5014, C5017, C5038, C5041, C5101, and C5104. The RING-type; atypical zinc finger occupies 4991-5042 (CMICFVEALSCAPSIHLECGHVFHYHCCKAVLEKRWSGPRITFGFSLCPICK). Residues 5096–5231 (YAYYVCFKCQ…LGCGVCRNAQ (136 aa)) are tandem cysteine domain. Residue C5115 is part of the active site. C5130, C5133, C5142, H5145, C5154, C5157, and C5158 together coordinate Zn(2+). C5165 is an active-site residue. The Zn(2+) site is built by C5172, C5175, C5193, C5207, H5213, C5224, and C5227.

Belongs to the RING-Cys relay (RCR) family. As to quaternary structure, component of an E3 ubiquitin ligase complex composed of hiw, Rae1 and Fsn. Interacts with Rae1; the interaction with Rae1 may protect hiw from autophagy-mediated degradation. In terms of tissue distribution, express throughout the nervous system. Stage 13 embryos show expression in the central nervous system (CNS) at the longitudinal axon tracts around which the synaptic neuropil forms. Expression outside the CNS starts at stage 16 in presynaptic terminals at the periactive zone which surround the active zone. Expression at neuromuscular junctions (NMJ) and in the CNS is also seen in third instar larvae (at protein level).

Its subcellular location is the synapse. It localises to the cell projection. It is found in the axon. The enzyme catalyses [E2 ubiquitin-conjugating enzyme]-S-ubiquitinyl-L-cysteine + [acceptor protein]-L-threonine = [E2 ubiquitin-conjugating enzyme]-L-cysteine + [acceptor protein]-3-O-ubiquitinyl-L-threonine.. It functions in the pathway protein modification; protein ubiquitination. In terms of biological role, atypical E3 ubiquitin-protein ligase which specifically mediates ubiquitination of threonine and serine residues on target proteins, instead of ubiquitinating lysine residues. Shows esterification activity towards both threonine and serine, with a preference for threonine, and acts via two essential catalytic cysteine residues that relay ubiquitin to its substrate via thioester intermediates. Required in the presynaptic motoneuron to down-regulate the levels of wnd and restrain synaptic terminal growth at the neuromuscular junction (NMJ) together with Rae1 and Fsn. This chain is E3 ubiquitin-protein ligase highwire, found in Drosophila melanogaster (Fruit fly).